Here is a 595-residue protein sequence, read N- to C-terminus: Phenylalanine--tRNA ligase beta subunit (595 aa).

A 3'-CCA residue in tRNA region spans residues 86-90; sequence KLSKP. The 79-residue stretch at 292–370 folds into the B5 domain; it reads FNDRIMDVSI…VGYGFNNLPK (79 aa). Mg(2+) is bound by residues aspartate 348, aspartate 354, glutamate 357, and aspartate 358.

Belongs to the phenylalanyl-tRNA synthetase beta subunit family. Type 2 subfamily. As to quaternary structure, tetramer of two alpha and two beta subunits. Mg(2+) serves as cofactor.

The protein localises to the cytoplasm. The enzyme catalyses tRNA(Phe) + L-phenylalanine + ATP = L-phenylalanyl-tRNA(Phe) + AMP + diphosphate + H(+). This Saccharomyces cerevisiae (strain ATCC 204508 / S288c) (Baker's yeast) protein is Phenylalanine--tRNA ligase beta subunit (FRS1).